We begin with the raw amino-acid sequence, 1966 residues long: Histone-lysine N-methyltransferase SETD1B (1966 aa).

Over residues 1-12 the composition is skewed to basic residues; sequence MENSHPPHHHHQ. Residues 1–26 form a disordered region; the sequence is MENSHPPHHHHQQPPPQPGPSGERRN. The interaction with WDR82 stretch occupies residues 68–98; it reads VEDPRVVGIWTKNKELELSVPKFKIDEFYVG. In terms of domain architecture, RRM spans 93 to 181; the sequence is DEFYVGPVPP…NIIHVELDTK (89 aa). Disordered stretches follow at residues 235-302, 357-660, 675-719, 963-1462, 1501-1541, 1555-1606, and 1636-1668; these read GCGS…LFSQ, VGGT…PKPM, LAPT…PPPA, KVKR…SGPL, PPLL…RPPA, QPQT…KLPF, and AKSR…PQPL. 3 stretches are compositionally biased toward polar residues: residues 243 to 259, 265 to 274, and 282 to 300; these read VTPN…TAYS, TPNSYGQGTP, and PFSQ…SYLF. Pro residues-rich tracts occupy residues 432 to 441 and 449 to 458; these read PAPPPLPPAE and GTPPGPPPPD. Basic and acidic residues predominate over residues 493-521; the sequence is EKPHDSLDSRIEMLLKEQRTKLLFLREPD. The segment covering 531 to 543 has biased composition (low complexity); that stretch reads SPISSSSSQLSPL. Residues 592 to 603 show a composition bias toward pro residues; that stretch reads PRPPPEPGPPDP. The segment covering 637–646 has biased composition (acidic residues); it reads EDMEISDDEM. Positions 679–719 are enriched in pro residues; sequence LPLPPPPGFPPLPPPPPPPPPQPGFPMPPPLPPPPPPPPPA. Residues Ser986 and Ser994 each carry the phosphoserine modification. Residues 995–1015 show a composition bias toward basic and acidic residues; it reads ERERDRDMADTPCELAKRDPK. Ser1031 is subject to Phosphoserine. The segment covering 1041 to 1064 has biased composition (low complexity); that stretch reads LSASSSSSASSSSGSSTTSPSSSA. 2 stretches are compositionally biased toward acidic residues: residues 1067–1087 and 1104–1142; these read KEEE…EEEE and KDDD…EEET. A compositionally biased stretch (low complexity) spans 1148-1174; the sequence is SKAEATSSSESSESSEFESSSESSPSS. A coiled-coil region spans residues 1173 to 1204; the sequence is SSSEDEEEVVAREEEEEEEEEEMVAEESMASA. Composition is skewed to acidic residues over residues 1175 to 1197 and 1229 to 1238; these read SEDE…EMVA and GMEEEVDIET. A phosphoserine mark is found at Ser1265, Ser1283, and Ser1335. Positions 1312 to 1340 are enriched in pro residues; sequence EPPMMLPLPLQPPLPPPRPPRPPSPPPEP. Low complexity predominate over residues 1383–1425; the sequence is PGGEPPLSGGSSGLSLSSPQVPGSPFSYPAPSPSLSSGGLPRT. Residues 1501-1514 are compositionally biased toward pro residues; that stretch reads PPLLPAPLASCPPP. Over residues 1515–1524 the composition is skewed to basic residues; that stretch reads MKRKPGRPRR. Positions 1580–1600 are enriched in pro residues; that stretch reads PAPPPPLPPQPPPPPPPPPVE. Ser1659 and Ser1663 each carry phosphoserine. Positions 1745–1750 match the WDR5 interaction motif (WIN) motif; sequence GCARSE. A disordered region spans residues 1767 to 1800; the sequence is SRASTDEPPADTQGMSIPAQPHASTRAGSERRSE. The RxxxRR motif motif lies at 1798 to 1803; sequence RSEQRR. The region spanning 1827-1944 is the SET domain; that stretch reads KKLKFCKSHI…VNEEITYDYK (118 aa). Residue Tyr1943 coordinates S-adenosyl-L-methionine. In terms of domain architecture, Post-SET spans 1950 to 1966; the sequence is VKIPCLCGSENCRGTLN.

It belongs to the class V-like SAM-binding methyltransferase superfamily. Component of the SET1B/COMPASS complex composed of the catalytic subunit SETD1B, WDR5, WDR82, RBBP5, ASH2L/ASH2, CXXC1/CFP1, HCFC1, DPY30 homotrimer and BOD1. Forms a core complex with the evolutionary conserved subcomplex WRAD composed of WDR5, RBBP5, ASH2L/ASH2 and DPY30 subunits; WRAD differentially stimulates the methyltransferase activity. Interacts with HCFC1 and ASH2L/ASH2. Interacts (via N-terminal region) with WDR82. Interacts (via the RRM domain) with hyperphosphorylated C-terminal domain (CTD) of RNA polymerase II large subunit (POLR2A) only in the presence of WDR82. Binds specifically to CTD heptad repeats phosphorylated on 'Ser-5' of each heptad. Interacts with RBM15. Interacts (via WIN motif) with WDR5.

It is found in the nucleus. It localises to the nucleus speckle. The protein resides in the chromosome. Its subcellular location is the cytoplasm. It catalyses the reaction L-lysyl(4)-[histone H3] + S-adenosyl-L-methionine = N(6)-methyl-L-lysyl(4)-[histone H3] + S-adenosyl-L-homocysteine + H(+). It carries out the reaction N(6)-methyl-L-lysyl(4)-[histone H3] + S-adenosyl-L-methionine = N(6),N(6)-dimethyl-L-lysyl(4)-[histone H3] + S-adenosyl-L-homocysteine + H(+). The enzyme catalyses N(6),N(6)-dimethyl-L-lysyl(4)-[histone H3] + S-adenosyl-L-methionine = N(6),N(6),N(6)-trimethyl-L-lysyl(4)-[histone H3] + S-adenosyl-L-homocysteine + H(+). Functionally, histone methyltransferase that catalyzes methyl group transfer from S-adenosyl-L-methionine to the epsilon-amino group of 'Lys-4' of histone H3 (H3K4) via a non-processive mechanism. Part of chromatin remodeling machinery, forms H3K4me1, H3K4me2 and H3K4me3 methylation marks at active chromatin sites where transcription and DNA repair take place. Plays an essential role in regulating the transcriptional programming of multipotent hematopoietic progenitor cells and lymphoid lineage specification during hematopoiesis. This Homo sapiens (Human) protein is Histone-lysine N-methyltransferase SETD1B (SETD1B).